The chain runs to 514 residues: Histidine ammonia-lyase (514 aa).

Residues 147–149 (ASG) constitute a cross-link (5-imidazolinone (Ala-Gly)). 2,3-didehydroalanine (Ser) is present on serine 148.

This sequence belongs to the PAL/histidase family. Post-translationally, contains an active site 4-methylidene-imidazol-5-one (MIO), which is formed autocatalytically by cyclization and dehydration of residues Ala-Ser-Gly.

Its subcellular location is the cytoplasm. It carries out the reaction L-histidine = trans-urocanate + NH4(+). It participates in amino-acid degradation; L-histidine degradation into L-glutamate; N-formimidoyl-L-glutamate from L-histidine: step 1/3. The protein is Histidine ammonia-lyase of Gloeobacter violaceus (strain ATCC 29082 / PCC 7421).